A 355-amino-acid polypeptide reads, in one-letter code: Peptide chain release factor 1 (355 aa).

Glutamine 233 carries the N5-methylglutamine modification. Residues 280–310 are disordered; the sequence is ERRKKEQKRANNRRGQVGSGDRSERIRTYNF.

This sequence belongs to the prokaryotic/mitochondrial release factor family. In terms of processing, methylated by PrmC. Methylation increases the termination efficiency of RF1.

The protein resides in the cytoplasm. Functionally, peptide chain release factor 1 directs the termination of translation in response to the peptide chain termination codons UAG and UAA. The sequence is that of Peptide chain release factor 1 from Rickettsia canadensis (strain McKiel).